Reading from the N-terminus, the 65-residue chain is DNA-directed RNA polymerase subunit Rpo10 (65 aa).

Zn(2+)-binding residues include Cys7, Cys10, Cys44, and Cys45.

The protein belongs to the archaeal Rpo10/eukaryotic RPB10 RNA polymerase subunit family. In terms of assembly, part of the RNA polymerase complex. Requires Zn(2+) as cofactor.

The protein resides in the cytoplasm. The enzyme catalyses RNA(n) + a ribonucleoside 5'-triphosphate = RNA(n+1) + diphosphate. Functionally, DNA-dependent RNA polymerase (RNAP) catalyzes the transcription of DNA into RNA using the four ribonucleoside triphosphates as substrates. The sequence is that of DNA-directed RNA polymerase subunit Rpo10 from Thermococcus onnurineus (strain NA1).